Consider the following 281-residue polypeptide: 4-diphosphocytidyl-2-C-methyl-D-erythritol kinase (281 aa).

The active site involves Lys11. An ATP-binding site is contributed by 95–105; it reads PVAAGLGGGSS. The active site involves Asp137.

The protein belongs to the GHMP kinase family. IspE subfamily.

The enzyme catalyses 4-CDP-2-C-methyl-D-erythritol + ATP = 4-CDP-2-C-methyl-D-erythritol 2-phosphate + ADP + H(+). Its pathway is isoprenoid biosynthesis; isopentenyl diphosphate biosynthesis via DXP pathway; isopentenyl diphosphate from 1-deoxy-D-xylulose 5-phosphate: step 3/6. Catalyzes the phosphorylation of the position 2 hydroxy group of 4-diphosphocytidyl-2C-methyl-D-erythritol. The polypeptide is 4-diphosphocytidyl-2-C-methyl-D-erythritol kinase (Geobacter metallireducens (strain ATCC 53774 / DSM 7210 / GS-15)).